The primary structure comprises 217 residues: Small ribosomal subunit protein uS3 (217 aa).

In terms of domain architecture, KH type-2 spans 38 to 106; the sequence is IRQLIQTKLA…QVHINIVEIK (69 aa).

It belongs to the universal ribosomal protein uS3 family. Part of the 30S ribosomal subunit. Forms a tight complex with proteins S10 and S14.

Binds the lower part of the 30S subunit head. Binds mRNA in the 70S ribosome, positioning it for translation. This is Small ribosomal subunit protein uS3 from Lactococcus lactis subsp. cremoris (strain MG1363).